The sequence spans 158 residues: Pyruvoyl-dependent arginine decarboxylase (158 aa).

Serine 44 bears the Pyruvic acid (Ser) mark.

The protein belongs to the PdaD family. The cofactor is pyruvate.

The enzyme catalyses L-arginine + H(+) = agmatine + CO2. In Pyrococcus furiosus (strain ATCC 43587 / DSM 3638 / JCM 8422 / Vc1), this protein is Pyruvoyl-dependent arginine decarboxylase.